The primary structure comprises 304 residues: Acetyl-coenzyme A carboxylase carboxyl transferase subunit beta (304 aa).

The disordered stretch occupies residues 16 to 42; the sequence is SSLPPKNSEGGLAYFDEPSPEQESTRK. The 257-residue stretch at 48-304 folds into the CoA carboxyltransferase N-terminal domain; that stretch reads LWVKCPKCGE…LLRYHQEGAV (257 aa). Cys52, Cys55, Cys71, and Cys74 together coordinate Zn(2+). The C4-type zinc finger occupies 52–74; the sequence is CPKCGEALFNKDLVENQRVCLTC.

Belongs to the AccD/PCCB family. Acetyl-CoA carboxylase is a heterohexamer composed of biotin carboxyl carrier protein (AccB), biotin carboxylase (AccC) and two subunits each of ACCase subunit alpha (AccA) and ACCase subunit beta (AccD). The cofactor is Zn(2+).

Its subcellular location is the cytoplasm. It carries out the reaction N(6)-carboxybiotinyl-L-lysyl-[protein] + acetyl-CoA = N(6)-biotinyl-L-lysyl-[protein] + malonyl-CoA. The protein operates within lipid metabolism; malonyl-CoA biosynthesis; malonyl-CoA from acetyl-CoA: step 1/1. Functionally, component of the acetyl coenzyme A carboxylase (ACC) complex. Biotin carboxylase (BC) catalyzes the carboxylation of biotin on its carrier protein (BCCP) and then the CO(2) group is transferred by the transcarboxylase to acetyl-CoA to form malonyl-CoA. The protein is Acetyl-coenzyme A carboxylase carboxyl transferase subunit beta of Desulfitobacterium hafniense (strain Y51).